The sequence spans 94 residues: Small ribosomal subunit protein bS18 (94 aa).

The protein belongs to the bacterial ribosomal protein bS18 family. Part of the 30S ribosomal subunit. Forms a tight heterodimer with protein bS6.

In terms of biological role, binds as a heterodimer with protein bS6 to the central domain of the 16S rRNA, where it helps stabilize the platform of the 30S subunit. In Leptothrix cholodnii (strain ATCC 51168 / LMG 8142 / SP-6) (Leptothrix discophora (strain SP-6)), this protein is Small ribosomal subunit protein bS18.